The following is a 342-amino-acid chain: Platelet-activating factor receptor (342 aa).

Topologically, residues 1 to 16 are extracellular; the sequence is MELNSSSRVDSEFRYT. A glycan (N-linked (GlcNAc...) asparagine) is linked at N4. A helical membrane pass occupies residues 17–38; the sequence is LFPIVYSIIFVLGIIANGYVLW. The Cytoplasmic portion of the chain corresponds to 39-54; it reads VFARLYPSKKLNEIKI. A helical transmembrane segment spans residues 55–74; it reads FMVNLTVADLLFLITLPLWI. Topologically, residues 75–91 are extracellular; it reads VYYSNQGNWFLPKFLCN. C90 and C173 are disulfide-bonded. Residues 92–113 form a helical membrane-spanning segment; sequence LAGCLFFINTYCSVAFLGVITY. Over 114-133 the chain is Cytoplasmic; the sequence is NRFQAVKYPIKTAQATTRKR. Residues 134–155 form a helical membrane-spanning segment; that stretch reads GIALSLVIWVAIVAAASYFLVM. Residues 156 to 184 are Extracellular-facing; that stretch reads DSTNVVSNKAGSGNITRCFEHYEKGSKPV. N-linked (GlcNAc...) asparagine glycosylation occurs at N169. Residues 185–205 traverse the membrane as a helical segment; it reads LIIHICIVLGFFIVFLLILFC. The Cytoplasmic portion of the chain corresponds to 206–233; it reads NLVIIHTLLRQPVKQQRNAEVRRRALWM. A helical transmembrane segment spans residues 234–254; that stretch reads VCTVLAVFVICFVPHHMVQLP. The Extracellular portion of the chain corresponds to 255-276; sequence WTLAELGMWPSSNHQAINDAHQ. The chain crosses the membrane as a helical span at residues 277 to 296; sequence VTLCLLSTNCVLDPVIYCFL. Residues 297-342 lie on the Cytoplasmic side of the membrane; that stretch reads TKKFRKHLSEKLNIMRSSQKCSRVTTDTGTEMAIPINHTPVNPIKN.

It belongs to the G-protein coupled receptor 1 family. Interacts with ARRB1.

It is found in the cell membrane. Receptor for platelet activating factor, a chemotactic phospholipid mediator that possesses potent inflammatory, smooth-muscle contractile and hypotensive activity. Seems to mediate its action via a G protein that activates a phosphatidylinositol-calcium second messenger system. The chain is Platelet-activating factor receptor (PTAFR) from Cavia porcellus (Guinea pig).